We begin with the raw amino-acid sequence, 401 residues long: Argininosuccinate synthase (401 aa).

9 to 17 (AYSGGLDTS) serves as a coordination point for ATP. Tyrosine 86 is a binding site for L-citrulline. Glycine 116 is an ATP binding site. L-aspartate-binding residues include threonine 118, asparagine 122, and aspartate 123. Asparagine 122 provides a ligand contact to L-citrulline. Arginine 126, serine 174, serine 183, glutamate 259, and tyrosine 271 together coordinate L-citrulline.

The protein belongs to the argininosuccinate synthase family. Type 1 subfamily. In terms of assembly, homotetramer.

The protein localises to the cytoplasm. It carries out the reaction L-citrulline + L-aspartate + ATP = 2-(N(omega)-L-arginino)succinate + AMP + diphosphate + H(+). It participates in amino-acid biosynthesis; L-arginine biosynthesis; L-arginine from L-ornithine and carbamoyl phosphate: step 2/3. The protein is Argininosuccinate synthase of Bacillus mycoides (strain KBAB4) (Bacillus weihenstephanensis).